A 94-amino-acid chain; its full sequence is Beta-diguetoxin-Dc1a (94 aa).

A signal peptide spans 1 to 17 (MKVFVVLLCLSLAAVYA). A propeptide spanning residues 18 to 38 (LEERLDKDADIMLDSPADMER) is cleaved from the precursor. 4 disulfide bridges follow: Cys50-Cys63, Cys57-Cys77, Cys62-Cys91, and Cys79-Cys89.

The protein belongs to the neurotoxin 26 (DTX) family. As to expression, expressed by the venom gland.

The protein localises to the secreted. Functionally, insecticidal toxin. This toxin promotes opening of insect Nav channels. The toxin binds to the S1-S2 and S3-S4 loops in the domain II voltage-sensor of insect Nav channels (i.e., receptor site 4). The American cockroach P.americana is largely resistant to the effects of this toxin due to an unusual sequence within the domain II S1-S2 loop. In vivo, paralyzes lepidopteran and dipteran larvae. Paralyzed insects ultimately die from secondary effects of starvation and dehydration. The polypeptide is Beta-diguetoxin-Dc1a (Diguetia canities (Desert bush spider)).